Consider the following 59-residue polypeptide: Conotoxin Sr5.4 (59 aa).

A signal peptide spans 1–22 (MRCLPVFVILLLLIASAPSVDA). The propeptide occupies 23–44 (QLKTKDDVPLASFHDNAKGTQH).

Belongs to the conotoxin T superfamily. Contains 2 disulfide bonds that can be either 'C1-C3, C2-C4' or 'C1-C4, C2-C3', since these disulfide connectivities have been observed for conotoxins with cysteine framework V (for examples, see AC P0DQQ7 and AC P81755). Expressed by the venom duct.

It localises to the secreted. This is Conotoxin Sr5.4 from Conus spurius (Alphabet cone).